Consider the following 466-residue polypeptide: Adenosylhomocysteinase (466 aa).

Substrate is bound by residues Thr57, Asp132, and Glu192. 193–195 (TTT) contributes to the NAD(+) binding site. Substrate-binding residues include Lys222 and Asp226. NAD(+) is bound by residues Asn227, 256-261 (GYGDVG), Glu279, Asn314, 335-337 (IGH), and Asn380.

The protein belongs to the adenosylhomocysteinase family. Requires NAD(+) as cofactor.

The protein resides in the cytoplasm. The catalysed reaction is S-adenosyl-L-homocysteine + H2O = L-homocysteine + adenosine. It functions in the pathway amino-acid biosynthesis; L-homocysteine biosynthesis; L-homocysteine from S-adenosyl-L-homocysteine: step 1/1. Its function is as follows. May play a key role in the regulation of the intracellular concentration of adenosylhomocysteine. In Brucella anthropi (strain ATCC 49188 / DSM 6882 / CCUG 24695 / JCM 21032 / LMG 3331 / NBRC 15819 / NCTC 12168 / Alc 37) (Ochrobactrum anthropi), this protein is Adenosylhomocysteinase.